Reading from the N-terminus, the 169-residue chain is MMNANRLPTRILGLDPGLRRTGWGVLAVEGSRMTHIAHGVITPDEKAEFADRLLHLFEGITAVIEQHRPDEAAVEEVFLNTNAQSTLKLGHARAAALIAPARAGLLVAEYSTRLVKKAVVGTGAADKAQIGFMIARLLPTAGKTTADCADALAVAITHANLRVANRRVA.

Catalysis depends on residues Asp15, Glu75, and Asp147. 3 residues coordinate Mg(2+): Asp15, Glu75, and Asp147.

It belongs to the RuvC family. Homodimer which binds Holliday junction (HJ) DNA. The HJ becomes 2-fold symmetrical on binding to RuvC with unstacked arms; it has a different conformation from HJ DNA in complex with RuvA. In the full resolvosome a probable DNA-RuvA(4)-RuvB(12)-RuvC(2) complex forms which resolves the HJ. It depends on Mg(2+) as a cofactor.

The protein resides in the cytoplasm. The enzyme catalyses Endonucleolytic cleavage at a junction such as a reciprocal single-stranded crossover between two homologous DNA duplexes (Holliday junction).. The RuvA-RuvB-RuvC complex processes Holliday junction (HJ) DNA during genetic recombination and DNA repair. Endonuclease that resolves HJ intermediates. Cleaves cruciform DNA by making single-stranded nicks across the HJ at symmetrical positions within the homologous arms, yielding a 5'-phosphate and a 3'-hydroxyl group; requires a central core of homology in the junction. The consensus cleavage sequence is 5'-(A/T)TT(C/G)-3'. Cleavage occurs on the 3'-side of the TT dinucleotide at the point of strand exchange. HJ branch migration catalyzed by RuvA-RuvB allows RuvC to scan DNA until it finds its consensus sequence, where it cleaves and resolves the cruciform DNA. This Caulobacter vibrioides (strain ATCC 19089 / CIP 103742 / CB 15) (Caulobacter crescentus) protein is Crossover junction endodeoxyribonuclease RuvC.